The following is a 362-amino-acid chain: Prostaglandin E2 receptor EP2 subtype (362 aa).

The Extracellular portion of the chain corresponds to 1–24 (MDNFLNDSKLMEDCKSRQWLLSGE). Asn6 carries an N-linked (GlcNAc...) asparagine glycan. Residues 25–48 (SPAISSVMFSAGVLGNLIALALLA) form a helical membrane-spanning segment. Over 49 to 66 (RRWRGDTGCSAGSRTSIS) the chain is Cytoplasmic. The chain crosses the membrane as a helical span at residues 67-92 (LFHVLVTELVLTDLLGTCLISPVVLA). The Extracellular portion of the chain corresponds to 93 to 112 (SYSRNQTLVALAPESHACTY). A disulfide bond links Cys110 and Cys188. A helical transmembrane segment spans residues 113–133 (FAFTMTFFSLATMLMLFAMAL). Topologically, residues 134 to 152 (ERYLSIGYPYFYRRHLSRR) are cytoplasmic. A helical transmembrane segment spans residues 153-177 (GGLAVLPVIYGASLLFCSLPLLNYG). Residues 178-199 (EYVQYCPGTWCFIRHGRTAYLQ) are Extracellular-facing. The helical transmembrane segment at 200 to 224 (LYATMLLLLIVAVLACNISVILNLI) threads the bilayer. Over 225–262 (RMHRRSRRSRCGLSGSSLRGPGSRRRGERTSMAEETDH) the chain is Cytoplasmic. Positions 234 to 255 (RCGLSGSSLRGPGSRRRGERTS) are disordered. A compositionally biased stretch (low complexity) spans 235 to 245 (CGLSGSSLRGP). A helical transmembrane segment spans residues 263 to 286 (LILLAIMTITFAICSLPFTIFAYM). Residues 287 to 299 (DETSSLKEKWDLR) lie on the Extracellular side of the membrane. The helical transmembrane segment at 300–323 (ALRFLSVNSIIDPWVFAILRPPVL) threads the bilayer. Topologically, residues 324 to 362 (RLMRSVLCCRTSLRTQEAQQTSCSTQSSASKQTDLCGQL) are cytoplasmic.

Belongs to the G-protein coupled receptor 1 family.

The protein localises to the cell membrane. Its function is as follows. Receptor for prostaglandin E2 (PGE2). The activity of this receptor is mediated by G(s) proteins that stimulate adenylate cyclase. The subsequent raise in intracellular cAMP is responsible for the relaxing effect of this receptor on smooth muscle. In Mus musculus (Mouse), this protein is Prostaglandin E2 receptor EP2 subtype (Ptger2).